A 49-amino-acid polypeptide reads, in one-letter code: Protein YlcJ (49 aa).

Residues Met1–Ser21 form the signal peptide.

This Escherichia coli (strain K12) protein is Protein YlcJ.